We begin with the raw amino-acid sequence, 351 residues long: Dihydroorotate dehydrogenase (quinone) (351 aa).

FMN is bound by residues 67-71 (AGFDK) and Thr91. Lys71 is a binding site for substrate. Residue 116-120 (NAMGF) coordinates substrate. Residues Asn145 and Asn178 each coordinate FMN. A substrate-binding site is contributed by Asn178. Ser181 serves as the catalytic Nucleophile. Asn183 serves as a coordination point for substrate. 2 residues coordinate FMN: Lys214 and Thr242. Position 243-244 (243-244 (NT)) interacts with substrate. FMN is bound by residues Gly262, Gly291, and 312 to 313 (YS).

It belongs to the dihydroorotate dehydrogenase family. Type 2 subfamily. Monomer. Requires FMN as cofactor.

Its subcellular location is the cell membrane. The enzyme catalyses (S)-dihydroorotate + a quinone = orotate + a quinol. It participates in pyrimidine metabolism; UMP biosynthesis via de novo pathway; orotate from (S)-dihydroorotate (quinone route): step 1/1. Functionally, catalyzes the conversion of dihydroorotate to orotate with quinone as electron acceptor. The polypeptide is Dihydroorotate dehydrogenase (quinone) (Helicobacter acinonychis (strain Sheeba)).